Here is a 275-residue protein sequence, read N- to C-terminus: Notch homolog 2 N-terminal-like protein B (275 aa).

The N-terminal stretch at 1–25 (MPALRPALLWALLALWLCCATPAHA) is a signal peptide. EGF-like domains are found at residues 26–63 (LQCRDGYEPCVNEGMCVTYHNGTGYCKCPEGFLGEYCQ), 64–102 (HRDPCEKNRCQNGGTCVAQAMLGKATCRCASGFTGEDCQ), 105–143 (TSHPCFVSRPCLNGGTCHMLSRDTYECTCQVGFTGKECQ), and 144–180 (WTDACLSHPCANGSTCTTVANQFSCKCLTGFTGQKCE). 17 cysteine pairs are disulfide-bonded: C28–C41, C35–C51, C53–C62, C68–C79, C73–C90, C92–C101, C109–C121, C115–C131, C133–C142, C148–C159, C153–C168, C170–C179, C186–C198, C192–C207, C209–C218, C225–C236, and C230–C246. N46 carries N-linked (GlcNAc...) asparagine glycosylation. The N-linked (GlcNAc...) asparagine glycan is linked to N155. The region spanning 182 to 219 (DVNECDIPGHCQHGGICLNLPGSYQCQCLQGFTGQYCD) is the EGF-like 5; calcium-binding domain. The EGF-like 6 domain maps to 221-258 (LYVPCAPSPCVNGGTCRQTGDFTFECNCLPETVRRGTE).

It belongs to the NOTCH family. In terms of assembly, interacts with NOTCH2. Interacts with DLL1; the interaction is direct. As to expression, expressed in radial glia neural stem cells during cortical development.

The protein resides in the secreted. In terms of biological role, human-specific protein that promotes neural progenitor proliferation and evolutionary expansion of the brain neocortex by regulating the Notch signaling pathway. Able to promote neural progenitor self-renewal, possibly by down-regulating neuronal differentiation genes, thereby delaying the differentiation of neuronal progenitors and leading to an overall final increase in neuronal production. Acts by enhancing the Notch signaling pathway via two different mechanisms that probably work in parallel to reach the same effect. Enhances Notch signaling pathway in a non-cell-autonomous manner via direct interaction with NOTCH2. Also promotes Notch signaling pathway in a cell-autonomous manner through inhibition of cis DLL1-NOTCH2 interactions, which promotes neuronal differentiation. The chain is Notch homolog 2 N-terminal-like protein B from Homo sapiens (Human).